The chain runs to 504 residues: Xylose import ATP-binding protein XylG (504 aa).

ABC transporter domains lie at 6–243 (LEMK…VGRE) and 260–504 (LKVD…TGGK). 38–45 (GENGAGKS) provides a ligand contact to ATP.

This sequence belongs to the ABC transporter superfamily. Xylose importer (TC 3.A.1.2.4) family. The complex is composed of two ATP-binding proteins (XylG), two transmembrane proteins (XylH) and a solute-binding protein (XylF).

It is found in the cell membrane. The catalysed reaction is D-xylose(out) + ATP + H2O = D-xylose(in) + ADP + phosphate + H(+). Part of the ABC transporter complex XylFGH involved in xylose import. Responsible for energy coupling to the transport system. The polypeptide is Xylose import ATP-binding protein XylG (Geobacillus kaustophilus (strain HTA426)).